Consider the following 452-residue polypeptide: tRNA modification GTPase MnmE (452 aa).

(6S)-5-formyl-5,6,7,8-tetrahydrofolate-binding residues include Arg-21, Glu-78, and Lys-118. One can recognise a TrmE-type G domain in the interval 214–375; that stretch reads GMKVVIAGRP…LRDHLKQAMG (162 aa). Asn-224 is a K(+) binding site. GTP is bound by residues 224 to 229, 243 to 249, and 268 to 271; these read NAGKSS, TDIAGTT, and DTAG. Residue Ser-228 coordinates Mg(2+). The K(+) site is built by Thr-243, Ile-245, and Thr-248. Thr-249 provides a ligand contact to Mg(2+). Lys-452 contributes to the (6S)-5-formyl-5,6,7,8-tetrahydrofolate binding site.

It belongs to the TRAFAC class TrmE-Era-EngA-EngB-Septin-like GTPase superfamily. TrmE GTPase family. Homodimer. Heterotetramer of two MnmE and two MnmG subunits. Requires K(+) as cofactor.

It localises to the cytoplasm. In terms of biological role, exhibits a very high intrinsic GTPase hydrolysis rate. Involved in the addition of a carboxymethylaminomethyl (cmnm) group at the wobble position (U34) of certain tRNAs, forming tRNA-cmnm(5)s(2)U34. The protein is tRNA modification GTPase MnmE of Haemophilus influenzae (strain 86-028NP).